The sequence spans 926 residues: Vacuolar protein sorting-associated protein 39 homolog (926 aa).

The CNH domain occupies 15–306 (PVEVTCLAFQ…MTLCSGARGQ (292 aa)). Residues 590–768 (DETEMARNLN…LFRTLVHPNQ (179 aa)) form a CHCR repeat.

The protein belongs to the VAM6/VPS39 family. In terms of assembly, probable core component of the homotypic fusion and vacuole protein sorting (HOPS) complex consisting of the core class C Vps proteins vps-11, vps-16, vps-18, and which further associates with vps-33.1, vps-39 and vps-41. May interact with lgg-2. Interacts with cuti-1.

The protein resides in the cytoplasm. It is found in the lysosome membrane. Its subcellular location is the late endosome membrane. It localises to the late endosome. The protein localises to the lysosome. Plays a role in vesicle-mediated protein trafficking to lysosomal compartments including the endocytic membrane transport and autophagic pathways. Believed to act in part as a component of the putative HOPS endosomal tethering complex which is proposed to be involved in the rab-5-to-rab-7 endosome conversion probably implicating sand-1, and via binding SNAREs and SNARE complexes to mediate tethering and docking events during SNARE-mediated membrane fusion. The HOPS complex is proposed to be recruited to rab-7 on the late endosomal membrane and to regulate late endocytic, phagocytic and autophagic traffic towards lysosomes. Involved in homotypic vesicle fusions between late endosomes and in heterotypic fusions between late endosomes and lysosomes. Required for fusion of endosomes. In association with lgg-2 mediates the tethering of autophagosomes with lysosomes to form autolysosomes. Within the HOPS complex, contributes to the normal development of gut granules in embryonic and adult intestinal cells. This Caenorhabditis elegans protein is Vacuolar protein sorting-associated protein 39 homolog.